A 617-amino-acid polypeptide reads, in one-letter code: Tetratricopeptide repeat protein 39B (617 aa).

TPR repeat units lie at residues 328–361 (SLIL…QEEW) and 561–594 (PFTL…YKDY).

Belongs to the TTC39 family.

Regulates high density lipoprotein (HDL) cholesterol metabolism by promoting the ubiquitination and degradation of the oxysterols receptors LXR (NR1H2 and NR1H3). The sequence is that of Tetratricopeptide repeat protein 39B (Ttc39b) from Rattus norvegicus (Rat).